The primary structure comprises 562 residues: Malate synthase (562 aa).

Arginine 177 (proton acceptor) is an active-site residue. Aspartate 463 acts as the Proton donor in catalysis. The Microbody targeting signal motif lies at 560–562 (SRL).

This sequence belongs to the malate synthase family.

The protein localises to the glyoxysome. The catalysed reaction is glyoxylate + acetyl-CoA + H2O = (S)-malate + CoA + H(+). It functions in the pathway carbohydrate metabolism; glyoxylate cycle; (S)-malate from isocitrate: step 2/2. Its function is as follows. Does not seem to be essential for lipid utilization and gluconeogenesis in seedlings. This is Malate synthase from Arabidopsis thaliana (Mouse-ear cress).